A 372-amino-acid polypeptide reads, in one-letter code: Fatty acid 2-hydroxylase (372 aa).

In terms of domain architecture, Cytochrome b5 heme-binding spans alanine 8 to arginine 86. Positions 43 and 69 each coordinate heme. 2 helical membrane-spanning segments follow: residues valine 168–tyrosine 188 and serine 213–isoleucine 233. Residues phenylalanine 219–threonine 361 form the Fatty acid hydroxylase domain. Histidine 234, histidine 239, histidine 257, histidine 260, and histidine 261 together coordinate Zn(2+). Helical transmembrane passes span serine 268–leucine 288 and leucine 290–leucine 310. Zn(2+) contacts are provided by histidine 315, histidine 319, histidine 336, histidine 339, and histidine 340.

The protein belongs to the sterol desaturase family. SCS7 subfamily. The cofactor is Zn(2+). As to expression, detected in oligodendrocytes (at protein level). Detected in sciatic nerve.

It localises to the endoplasmic reticulum membrane. The protein resides in the microsome membrane. The catalysed reaction is a 1,2-saturated fatty acid + 2 Fe(II)-[cytochrome b5] + O2 + 2 H(+) = a (R)-2-hydroxy fatty acid + 2 Fe(III)-[cytochrome b5] + H2O. It carries out the reaction hexadecanoate + 2 Fe(II)-[cytochrome b5] + O2 + 2 H(+) = (R)-2-hydroxyhexadecanoate + 2 Fe(III)-[cytochrome b5] + H2O. It catalyses the reaction octadecanoate + 2 Fe(II)-[cytochrome b5] + O2 + 2 H(+) = (R)-2-hydroxyoctadecanoate + 2 Fe(III)-[cytochrome b5] + H2O. The enzyme catalyses docosanoate + 2 Fe(II)-[cytochrome b5] + O2 + 2 H(+) = 2-hydroxydocosanoate + 2 Fe(III)-[cytochrome b5] + H2O. The catalysed reaction is tetracosanoate + 2 Fe(II)-[cytochrome b5] + O2 + 2 H(+) = (R)-2-hydroxytetracosanoate + 2 Fe(III)-[cytochrome b5] + H2O. It functions in the pathway lipid metabolism; fatty acid metabolism. It participates in sphingolipid metabolism; galactosylceramide biosynthesis. In terms of biological role, catalyzes the hydroxylation of free fatty acids at the C-2 position to produce 2-hydroxy fatty acids, which are building blocks of sphingolipids and glycosphingolipids common in neural tissue and epidermis. FA2H is stereospecific for the production of (R)-2-hydroxy fatty acids. Plays an essential role in the synthesis of galactosphingolipids of the myelin sheath. Responsible for the synthesis of sphingolipids and glycosphingolipids involved in the formation of epidermal lamellar bodies critical for skin permeability barrier. Participates in the synthesis of glycosphingolipids and a fraction of type II wax diesters in sebaceous gland, specifically regulating hair follicle homeostasis. Involved in the synthesis of sphingolipids of plasma membrane rafts, controlling lipid raft mobility and trafficking of raft-associated proteins. This Rattus norvegicus (Rat) protein is Fatty acid 2-hydroxylase.